A 72-amino-acid chain; its full sequence is Translation initiation factor IF-1 (72 aa).

Positions methionine 1–lysine 72 constitute an S1-like domain.

It belongs to the IF-1 family. As to quaternary structure, component of the 30S ribosomal translation pre-initiation complex which assembles on the 30S ribosome in the order IF-2 and IF-3, IF-1 and N-formylmethionyl-tRNA(fMet); mRNA recruitment can occur at any time during PIC assembly.

The protein localises to the cytoplasm. One of the essential components for the initiation of protein synthesis. Stabilizes the binding of IF-2 and IF-3 on the 30S subunit to which N-formylmethionyl-tRNA(fMet) subsequently binds. Helps modulate mRNA selection, yielding the 30S pre-initiation complex (PIC). Upon addition of the 50S ribosomal subunit IF-1, IF-2 and IF-3 are released leaving the mature 70S translation initiation complex. This chain is Translation initiation factor IF-1, found in Parabacteroides distasonis (strain ATCC 8503 / DSM 20701 / CIP 104284 / JCM 5825 / NCTC 11152).